A 1503-amino-acid polypeptide reads, in one-letter code: Lysine-specific demethylase 5B-B (1503 aa).

The JmjN domain maps to cysteine 15–proline 56. An ARID domain is found at threonine 80–serine 170. Positions valine 202–alanine 211 are enriched in polar residues. 2 disordered regions span residues valine 202 to serine 223 and isoleucine 268 to proline 287. The span at isoleucine 268 to serine 278 shows a compositional bias: basic and acidic residues. A PHD-type 1 zinc finger spans residues leucine 295–glutamine 345. Positions lysine 439–arginine 605 constitute a JmjC domain. Fe cation contacts are provided by histidine 485, aspartate 488, and histidine 573. The segment at leucine 1168 to serine 1216 adopts a PHD-type 2 zinc-finger fold. Disordered stretches follow at residues threonine 1362–aspartate 1381 and glutamate 1403–glutamate 1442. A PHD-type 3 zinc finger spans residues methionine 1444–serine 1497.

The protein belongs to the JARID1 histone demethylase family. The cofactor is Fe(2+).

The protein localises to the nucleus. It catalyses the reaction N(6),N(6),N(6)-trimethyl-L-lysyl(4)-[histone H3] + 3 2-oxoglutarate + 3 O2 = L-lysyl(4)-[histone H3] + 3 formaldehyde + 3 succinate + 3 CO2. In terms of biological role, histone demethylase that demethylates 'Lys-4' of histone H3, thereby playing a central role in histone code. Does not demethylate histone H3 'Lys-9' or H3 'Lys-27'. Demethylates trimethylated, dimethylated and monomethylated H3 'Lys-4'. Acts as a transcriptional corepressor. This is Lysine-specific demethylase 5B-B (kdm5bb) from Danio rerio (Zebrafish).